The following is a 2713-amino-acid chain: Histone-lysine N-methyltransferase 2B (2713 aa).

Residues Met1–Pro11 show a composition bias toward gly residues. Disordered regions lie at residues Met1–Thr65, Arg82–Val524, and Val542–Ala783. Ala2 is modified (N-acetylalanine). Positions Gly12–Pro24 are enriched in low complexity. The short motif at Arg17–Arg36 is the Menin-binding motif (MBM) element. Composition is skewed to gly residues over residues Arg25 to Asn38 and Arg49 to Glu60. The a.T hook 1 DNA-binding region spans Gly37–Arg44. The segment covering Pro109 to Phe123 has biased composition (acidic residues). A DNA-binding region (a.T hook 2) is located at residues Glu110–Glu117. Phosphoserine is present on residues Ser113, Ser114, and Ser118. Over residues Gln144–Thr158 the composition is skewed to basic residues. The span at Pro340–Lys360 shows a compositional bias: basic and acidic residues. Positions Gln357–Glu365 form a DNA-binding region, a.T hook 3. A compositionally biased stretch (acidic residues) spans Leu361–Thr393. The span at Glu394–Lys412 shows a compositional bias: basic and acidic residues. A compositionally biased stretch (pro residues) spans Pro414 to Ala460. Over residues Gly501 to Leu517 the composition is skewed to low complexity. Residues Arg555–Lys566 show a composition bias toward basic and acidic residues. A compositionally biased stretch (pro residues) spans Ala577–Leu605. Over residues Pro606 to Thr617 the composition is skewed to basic and acidic residues. Residues Leu627 to Ala645 are compositionally biased toward pro residues. Low complexity-rich tracts occupy residues Thr646–Pro657, Val715–Pro728, and Gln738–Gln756. Residues Ala757 to Thr774 are compositionally biased toward pro residues. A Glycyl lysine isopeptide (Lys-Gly) (interchain with G-Cter in SUMO2) cross-link involves residue Lys810. Ser826, Ser849, and Ser866 each carry phosphoserine. 2 disordered regions span residues Thr831 to Arg872 and Ser899 to Lys964. Over residues Thr841–Ser862 the composition is skewed to basic and acidic residues. The segment covering Glu912–Ser922 has biased composition (low complexity). Ser941 carries the post-translational modification Phosphoserine. Over residues Thr953–Lys964 the composition is skewed to basic residues. A CXXC-type zinc finger spans residues Lys964–Asp1011. Residues Cys971, Cys974, Cys977, Cys983, Cys986, Cys989, Cys1005, and Cys1010 each coordinate Zn(2+). 2 disordered regions span residues Leu1032–Leu1076 and Gln1088–Val1138. Phosphoserine is present on residues Ser1037, Ser1040, Ser1098, and Ser1101. Residue Lys1142 forms a Glycyl lysine isopeptide (Lys-Gly) (interchain with G-Cter in SUMO2) linkage. PHD-type zinc fingers lie at residues Pro1207–Cys1258, Cys1255–Cys1309, and Gly1341–Ala1402. The Bromo domain maps to Ala1410 to Ala1510. The disordered stretch occupies residues Arg1550 to Ser1572. The C2HC pre-PHD-type zinc-finger motif lies at Pro1584 to Val1624. The PHD-type 4 zinc finger occupies Met1645–Thr1692. One can recognise an FYR N-terminal domain in the interval Val1733–Tyr1789. A compositionally biased stretch (polar residues) spans Gln1808–Asp1821. 5 disordered regions span residues Gln1808–Phe1973, Gln2056–Asp2104, Asn2116–Ala2160, Val2279–Leu2356, and Tyr2382–Val2408. Composition is skewed to low complexity over residues Pro1872–Leu1890 and Arg1923–Pro1933. Ser1926 and Ser1932 each carry phosphoserine. Residues Leu1939–Ser1950 are compositionally biased toward polar residues. A compositionally biased stretch (acidic residues) spans Asp2058–Ala2068. Residues Thr2064 and Thr2079 each carry the phosphothreonine modification. The span at Pro2084–Gly2093 shows a compositional bias: gly residues. A compositionally biased stretch (polar residues) spans Asn2140–Ala2153. Residues Ser2286 and Ser2346 each carry the phosphoserine modification. Residues Gly2409–Tyr2490 enclose the FYR C-terminal domain. The short motif at Gly2506 to Glu2511 is the WDR5 interaction motif (WIN) element. In terms of domain architecture, SET spans Glu2573–Lys2689. Residues His2583, Arg2585, Tyr2627, and Asn2650 to His2651 contribute to the S-adenosyl-L-methionine site. Zn(2+) is bound by residues Cys2653 and Cys2701. The region spanning Asn2697 to Asn2713 is the Post-SET domain. Residue Asn2702 participates in S-adenosyl-L-methionine binding. Positions 2703 and 2708 each coordinate Zn(2+).

This sequence belongs to the class V-like SAM-binding methyltransferase superfamily. Histone-lysine methyltransferase family. TRX/MLL subfamily. In terms of assembly, component of the menin-associated histone methyltransferase complex, at least composed of KMT2B/MLL4, ASH2L, RBBP5, WDR5, DPY30, MEN1; the complex interacts with POLR2A and POLR2B via MEN1. Interacts with NFE2. Interacts with KDM6B. Interacts (via WIN motif) with WDR5. Interacts (via MBM motif) with MEN1.

The protein resides in the nucleus. It catalyses the reaction L-lysyl(4)-[histone H3] + S-adenosyl-L-methionine = N(6)-methyl-L-lysyl(4)-[histone H3] + S-adenosyl-L-homocysteine + H(+). It carries out the reaction N(6)-methyl-L-lysyl(4)-[histone H3] + S-adenosyl-L-methionine = N(6),N(6)-dimethyl-L-lysyl(4)-[histone H3] + S-adenosyl-L-homocysteine + H(+). In terms of biological role, histone methyltransferase that catalyzes methyl group transfer from S-adenosyl-L-methionine to the epsilon-amino group of 'Lys-4' of histone H3 (H3K4) via a non-processive mechanism. Part of chromatin remodeling machinery predominantly forms H3K4me1 and H3K4me2 methylation marks at active chromatin sites where transcription and DNA repair take place. Likely plays a redundant role with KMT2C in enriching H3K4me1 marks on primed and active enhancer elements. Plays a central role in beta-globin locus transcription regulation by being recruited by NFE2. Plays an important role in controlling bulk H3K4me during oocyte growth and preimplantation development. Required during the transcriptionally active period of oocyte growth for the establishment and/or maintenance of bulk H3K4 trimethylation (H3K4me3), global transcriptional silencing that preceeds resumption of meiosis, oocyte survival and normal zygotic genome activation. The polypeptide is Histone-lysine N-methyltransferase 2B (Kmt2b) (Mus musculus (Mouse)).